The chain runs to 82 residues: ATP synthase subunit c (82 aa).

The next 2 helical transmembrane spans lie at 7–27 and 53–73; these read LVAL…SIGI and FILA…ALLF.

Belongs to the ATPase C chain family. As to quaternary structure, F-type ATPases have 2 components, F(1) - the catalytic core - and F(0) - the membrane proton channel. F(1) has five subunits: alpha(3), beta(3), gamma(1), delta(1), epsilon(1). F(0) has three main subunits: a(1), b(2) and c(10-14). The alpha and beta chains form an alternating ring which encloses part of the gamma chain. F(1) is attached to F(0) by a central stalk formed by the gamma and epsilon chains, while a peripheral stalk is formed by the delta and b chains.

Its subcellular location is the cell inner membrane. Functionally, f(1)F(0) ATP synthase produces ATP from ADP in the presence of a proton or sodium gradient. F-type ATPases consist of two structural domains, F(1) containing the extramembraneous catalytic core and F(0) containing the membrane proton channel, linked together by a central stalk and a peripheral stalk. During catalysis, ATP synthesis in the catalytic domain of F(1) is coupled via a rotary mechanism of the central stalk subunits to proton translocation. In terms of biological role, key component of the F(0) channel; it plays a direct role in translocation across the membrane. A homomeric c-ring of between 10-14 subunits forms the central stalk rotor element with the F(1) delta and epsilon subunits. The polypeptide is ATP synthase subunit c (Acidovorax ebreus (strain TPSY) (Diaphorobacter sp. (strain TPSY))).